A 278-amino-acid polypeptide reads, in one-letter code: Myb/SANT-like DNA-binding domain-containing protein 1 (278 aa).

The Myb-like domain maps to 44–131 (RNWTDAEMRG…WPYYLAIDRI (88 aa)). The interval 139-167 (CEGKLPDGQQPGPSTSQTEASLSPSAKST) is disordered. Over residues 149–166 (PGPSTSQTEASLSPSAKS) the composition is skewed to polar residues.

The sequence is that of Myb/SANT-like DNA-binding domain-containing protein 1 (Msantd1) from Mus musculus (Mouse).